Here is a 149-residue protein sequence, read N- to C-terminus: Nucleoside diphosphate kinase (149 aa).

Residues Lys-9, Phe-57, Arg-85, Thr-91, Arg-102, and Asn-112 each contribute to the ATP site. Catalysis depends on His-115, which acts as the Pros-phosphohistidine intermediate.

It belongs to the NDK family. As to quaternary structure, homotetramer. Requires Mg(2+) as cofactor.

The protein localises to the cytoplasm. The enzyme catalyses a 2'-deoxyribonucleoside 5'-diphosphate + ATP = a 2'-deoxyribonucleoside 5'-triphosphate + ADP. It carries out the reaction a ribonucleoside 5'-diphosphate + ATP = a ribonucleoside 5'-triphosphate + ADP. Major role in the synthesis of nucleoside triphosphates other than ATP. The ATP gamma phosphate is transferred to the NDP beta phosphate via a ping-pong mechanism, using a phosphorylated active-site intermediate. The chain is Nucleoside diphosphate kinase from Desulfitobacterium hafniense (strain DSM 10664 / DCB-2).